The following is a 240-amino-acid chain: Guanine nucleotide exchange factor sopE2 (240 aa).

Residues 78–240 (LTSKTVKDFM…IANKYLQNAS (163 aa)) form a GEF catalytic domain region.

It belongs to the GEF (guanine exchange factor) SopE family.

Its subcellular location is the secreted. Activator for CDC42 by directly engaging this Rho GTPase and acting as potent guanine nucleotide exchange factor (GEF). This activation results in actin cytoskeleton rearrangements and stimulates membrane ruffling, promoting bacterial entry into non-phagocytic cells. Chaperone InvB is required for secretion, translocation and stabilization of intracellular levels of sopE2. In Salmonella paratyphi A (strain ATCC 9150 / SARB42), this protein is Guanine nucleotide exchange factor sopE2 (sopE2).